We begin with the raw amino-acid sequence, 238 residues long: Large ribosomal subunit protein uL3 (238 aa).

Disordered regions lie at residues 140–164 (SHRS…KMPG) and 212–238 (LPKE…QEGA). At Gln151 the chain carries N5-methylglutamine. A compositionally biased stretch (low complexity) spans 225–238 (AGGEAEAAAQQEGA).

Belongs to the universal ribosomal protein uL3 family. As to quaternary structure, part of the 50S ribosomal subunit. Forms a cluster with proteins L14 and L19. Post-translationally, methylated by PrmB.

Functionally, one of the primary rRNA binding proteins, it binds directly near the 3'-end of the 23S rRNA, where it nucleates assembly of the 50S subunit. This Bradyrhizobium diazoefficiens (strain JCM 10833 / BCRC 13528 / IAM 13628 / NBRC 14792 / USDA 110) protein is Large ribosomal subunit protein uL3.